Consider the following 380-residue polypeptide: Chaperone protein DnaJ (380 aa).

In terms of domain architecture, J spans 5-69; sequence DYYEILGVSK…QKRAHYDQFG (65 aa). A CR-type zinc finger spans residues 135 to 217; that stretch reads GKETDIEIPR…CGGTGRVKRR (83 aa). C148, C151, C165, C168, C191, C194, C205, and C208 together coordinate Zn(2+). CXXCXGXG motif repeat units follow at residues 148–155, 165–172, 191–198, and 205–212; these read CNTCHGTG, CSYCHGTG, CPYCGGTG, and CTTCGGTG.

It belongs to the DnaJ family. As to quaternary structure, homodimer. Requires Zn(2+) as cofactor.

It localises to the cytoplasm. Its function is as follows. Participates actively in the response to hyperosmotic and heat shock by preventing the aggregation of stress-denatured proteins and by disaggregating proteins, also in an autonomous, DnaK-independent fashion. Unfolded proteins bind initially to DnaJ; upon interaction with the DnaJ-bound protein, DnaK hydrolyzes its bound ATP, resulting in the formation of a stable complex. GrpE releases ADP from DnaK; ATP binding to DnaK triggers the release of the substrate protein, thus completing the reaction cycle. Several rounds of ATP-dependent interactions between DnaJ, DnaK and GrpE are required for fully efficient folding. Also involved, together with DnaK and GrpE, in the DNA replication of plasmids through activation of initiation proteins. This chain is Chaperone protein DnaJ, found in Parageobacillus thermoglucosidasius (Geobacillus thermoglucosidasius).